The sequence spans 570 residues: Proline--tRNA ligase (570 aa).

It belongs to the class-II aminoacyl-tRNA synthetase family. ProS type 1 subfamily. Homodimer.

It is found in the cytoplasm. The catalysed reaction is tRNA(Pro) + L-proline + ATP = L-prolyl-tRNA(Pro) + AMP + diphosphate. Functionally, catalyzes the attachment of proline to tRNA(Pro) in a two-step reaction: proline is first activated by ATP to form Pro-AMP and then transferred to the acceptor end of tRNA(Pro). As ProRS can inadvertently accommodate and process non-cognate amino acids such as alanine and cysteine, to avoid such errors it has two additional distinct editing activities against alanine. One activity is designated as 'pretransfer' editing and involves the tRNA(Pro)-independent hydrolysis of activated Ala-AMP. The other activity is designated 'posttransfer' editing and involves deacylation of mischarged Ala-tRNA(Pro). The misacylated Cys-tRNA(Pro) is not edited by ProRS. The chain is Proline--tRNA ligase from Shewanella sp. (strain MR-4).